The chain runs to 335 residues: Fructose-1,6-bisphosphatase class 1 (335 aa).

4 residues coordinate Mg(2+): Glu-92, Asp-114, Leu-116, and Asp-117. Residues 117-120, Asn-209, and Lys-275 contribute to the substrate site; that span reads DGSS. Residue Glu-281 coordinates Mg(2+).

It belongs to the FBPase class 1 family. Homotetramer. Requires Mg(2+) as cofactor.

It is found in the cytoplasm. It catalyses the reaction beta-D-fructose 1,6-bisphosphate + H2O = beta-D-fructose 6-phosphate + phosphate. The protein operates within carbohydrate biosynthesis; gluconeogenesis. The sequence is that of Fructose-1,6-bisphosphatase class 1 from Delftia acidovorans (strain DSM 14801 / SPH-1).